A 647-amino-acid polypeptide reads, in one-letter code: MSSECLLPYYTAHSYRSMGVFNTSMGNLQRQLYKGGEYDIFKYAPMFESDFIQISKKGEVIDVHNRVRMVTVCIASTSPVLPLPDVMLLARPAKVCEEHARRARFIKGRGYKPSKTLELTRLLPLKFVKISIHDHEKQQLRLKLATGRTFYLQLCPSSDAREDLFCYWEKLVYLLRPPVNSCISNPSIPTADTSTETKSTLVSEIHGEGDRDSKFQTSQDVSEATSAAFAGGERTQPNIAAILTTGLAKARAAGAAAGTGAAGTAGTAGAAGATGAAGATGAAGSARAAGGAGSARAAGATGSARAAGATGSARAAGATGSARAAGGNTAAAVMTPLAGLARAGTPTSPVSGVISIAATTSKSPGSGQVATGLTGTASKDQERSESSKAMAVVANITTESVDVVLAGAASFTSESPSAEGDAYGSPDTGLNVAFAGSITTKGPAEDKPEAPLVSTLQSEGYMCERDGSQKVSHTSSETQKEKRERRESDRKGSRKSSHHQRTGASRHSSSKDKGRKTSSYRSVSGHGKTREDKKEKGRGSLRDQRHSSSYRSESRTGHKSRKNRPAASGGFVSKRATKIRSFFRAFLVRPTLKTENTSGERGGVDIVTKLVEKQDIETTVEKSKDLEFSDTMASESMEKIILETKPI.

The span at 188–202 (IPTADTSTETKSTLV) shows a compositional bias: polar residues. 4 disordered regions span residues 188-220 (IPTADTSTETKSTLVSEIHGEGDRDSKFQTSQD), 267-296 (TAGAAGATGAAGATGAAGSARAAGGAGSAR), 361-384 (SKSPGSGQVATGLTGTASKDQERS), and 465-573 (RDGS…GFVS). Basic and acidic residues predominate over residues 205–214 (IHGEGDRDSK). Positions 361 to 378 (SKSPGSGQVATGLTGTAS) are enriched in polar residues. The residue at position 378 (S378) is a Phosphoserine. Residues 478-491 (TQKEKRERRESDRK) are compositionally biased toward basic and acidic residues. Residues 492-501 (GSRKSSHHQR) show a composition bias toward basic residues. A Bipartite nuclear localization signal motif is present at residues 494 to 511 (RKSSHHQRTGASRHSSSK). The span at 528–556 (KTREDKKEKGRGSLRDQRHSSSYRSESRT) shows a compositional bias: basic and acidic residues. Phosphoserine occurs at positions 634 and 636.

This sequence belongs to the GARIN family. As to quaternary structure, interacts (via N-terminus) with RAB2B (in GTP-bound form). Interacts with FRG1.

Its subcellular location is the golgi apparatus. It is found in the nucleus. The protein localises to the cajal body. In terms of biological role, may be involved in RNA biogenesis. This chain is Golgi-associated RAB2B interactor protein 3 (Garin3), found in Rattus norvegicus (Rat).